The sequence spans 270 residues: Diaminopimelate epimerase (270 aa).

Residues Asn-15, Gln-49, and Asn-66 each coordinate substrate. The Proton donor role is filled by Cys-75. Substrate is bound by residues 76-77 (GN), Asn-155, Asn-187, and 204-205 (ER). The Proton acceptor role is filled by Cys-213. 214-215 (GS) serves as a coordination point for substrate.

The protein belongs to the diaminopimelate epimerase family. In terms of assembly, homodimer.

Its subcellular location is the cytoplasm. The catalysed reaction is (2S,6S)-2,6-diaminopimelate = meso-2,6-diaminopimelate. It participates in amino-acid biosynthesis; L-lysine biosynthesis via DAP pathway; DL-2,6-diaminopimelate from LL-2,6-diaminopimelate: step 1/1. Catalyzes the stereoinversion of LL-2,6-diaminopimelate (L,L-DAP) to meso-diaminopimelate (meso-DAP), a precursor of L-lysine and an essential component of the bacterial peptidoglycan. The chain is Diaminopimelate epimerase from Rickettsia felis (strain ATCC VR-1525 / URRWXCal2) (Rickettsia azadi).